A 261-amino-acid chain; its full sequence is 14-3-3 protein 8 (261 aa).

Residues 237–261 (DIPEDGEEAPKGDAANKVGAGEDAE) form a disordered region.

It belongs to the 14-3-3 family. As to quaternary structure, homodimer.

In Solanum lycopersicum (Tomato), this protein is 14-3-3 protein 8 (TFT8).